Consider the following 146-residue polypeptide: MVMGLGLFLLVFMLGLGLTPPTLAQDNPRYRDFLAKHYDATPQGRNDRYCESTMRRRHLTSPCKDINTFVHGNRHHITAICGDENGSPYGGNLRISTSPFQVTTCKLRGGSPRPPCQYRATRGSRNIVVGCENGLPVHLDESIFRP.

A signal peptide spans 1–24 (MVMGLGLFLLVFMLGLGLTPPTLA). The residue at position 25 (Gln-25) is a Pyrrolidone carboxylic acid. His-37 acts as the Proton acceptor in catalysis. Arg-45 serves as a coordination point for tRNA. 3 disulfides stabilise this stretch: Cys-50-Cys-105, Cys-63-Cys-116, and Cys-81-Cys-131. Positions 55–59 (RRRHL) match the Nucleolar localization signal motif. TRNA contacts are provided by Cys-105 and Ile-127. His-138 (proton donor) is an active-site residue.

Belongs to the pancreatic ribonuclease family. In terms of assembly, homodimer. Interacts with RNH1; inhibiting ANG ribonuclease activity. Interacts with PCNA.

The protein localises to the secreted. The protein resides in the nucleus. Its subcellular location is the nucleolus. It is found in the cytoplasm. It localises to the stress granule. With respect to regulation, has weak tRNA ribonuclease activity by itself due to partial autoinhibition by its C-terminus, which folds into a short alpha-helix that partially occludes the substrate-binding site. In absence of stress, the ribonuclease activity is inhibited by RNH1 in the cytoplasm. In response to stress, dissociates from RNH1 in the cytoplasm and associates with cytoplasmic ribosomes with vacant A-sites: ribosomes directly activate the tRNA ribonuclease activity of ANG by refolding the C-terminal alpha-helix. In response to stress, the angiogenic activity of ANG is inhibited by RNH1 in the nucleus. Its function is as follows. Secreted ribonuclease that can either promote or restrict cell proliferation of target cells, depending on the context. Endocytosed in target cells via its receptor PLXNB2 and translocates to the cytoplasm or nucleus. Under stress conditions, localizes to the cytoplasm and promotes the assembly of stress granules (SGs): specifically cleaves a subset of tRNAs within anticodon loops to produce tRNA-derived stress-induced fragments (tiRNAs), resulting in translation repression and inhibition of cell proliferation. tiRNas also prevent formation of apoptosome, thereby promoting cell survival. Preferentially cleaves RNAs between a pyrimidine and an adenosine residue, suggesting that it cleaves the anticodon loop of tRNA(Ala) (32-UUAGCAU-38) after positions 33 and 36. Cleaves a subset of tRNAs, including tRNA(Ala), tRNA(Glu), tRNA(Gly), tRNA(Lys), tRNA(Val), tRNA(His), tRNA(Asp) and tRNA(Sec). Under growth conditions and in differentiated cells, translocates to the nucleus and stimulates ribosomal RNA (rRNA) transcription, including that containing the initiation site sequences of 45S rRNA, thereby promoting cell growth and proliferation. Angiogenin induces vascularization of normal and malignant tissues via its ability to promote rRNA transcription. Involved in hematopoietic stem and progenitor cell (HSPC) growth and survival by promoting rRNA transcription in growth conditions and inhibiting translation in response to stress, respectively. Mediates the crosstalk between myeloid and intestinal epithelial cells to protect the intestinal epithelial barrier integrity: secreted by myeloid cells and promotes intestinal epithelial cells proliferation and survival. Also mediates osteoclast-endothelial cell crosstalk in growing bone: produced by osteoclasts and protects the neighboring vascular cells against senescence by promoting rRNA transcription. This Macaca mulatta (Rhesus macaque) protein is Angiogenin (ANG).